A 520-amino-acid polypeptide reads, in one-letter code: MSASPLLGMSRREFLTKLTGAGAAAFLMDWAAPVIEKAYGAGPCPGHLTDIEHIVLLMQENRSFDHYFGTLSSTNGFNAASPAFQQMGWNPMTQALDPAGVTIPFRLDTTRGPFLDGECVNDPEHQWVGMHLAWNGGANDNWLPAQATTRAGPYVPLTMGYYTRQDIPIHYLLADTFTICDGYHCSLLTGTLPNRLYWLSANIDPAGTDGGPQLVEPGFLPLQQFSWRIMPENLEDAGVSWKVYQNKGLGRFINTPISNNGLVQAFRQAADPRSNLARYGIAPTYPGDFAADVRANRLPKVSWLVPNILQSEHPALPVALGAVSMVTALRILLSNPAVWEKTALIVSYDENGGFFDHVTPPTAPPGTPGEFVTVPNIDAVPGSGGIRGPLGLGFRVPCIVISPYSRGPLMVSDTFDHTSQLKLIRARFGVPVPNMTAWRDGVVGDMTSAFNFATPPNSTRPNLSHPLLGALPKLPQCIPNVVLGTTDGALPSIPYRVPYPQVMPTQETTPVRGTPSGLCS.

The tat-type signal signal peptide spans 1–38 (MSASPLLGMSRREFLTKLTGAGAAAFLMDWAAPVIEKA).

This sequence belongs to the bacterial phospholipase C family. Post-translationally, predicted to be exported by the Tat system. The position of the signal peptide cleavage has not been experimentally proven.

It localises to the secreted. The protein localises to the cell wall. The catalysed reaction is a 1,2-diacyl-sn-glycero-3-phosphocholine + H2O = phosphocholine + a 1,2-diacyl-sn-glycerol + H(+). Its function is as follows. Involved in virulence. Induces cytotoxic effects on mouse macrophage cell lines, via direct or indirect enzymatic hydrolysis of cell membrane phospholipids. Hydrolyzes phosphatidylcholine. In Mycobacterium tuberculosis (strain CDC 1551 / Oshkosh), this protein is Phospholipase C A.